A 229-amino-acid polypeptide reads, in one-letter code: Uracil-DNA glycosylase (229 aa).

Asp-65 (proton acceptor) is an active-site residue.

Belongs to the uracil-DNA glycosylase (UDG) superfamily. UNG family.

It localises to the cytoplasm. The enzyme catalyses Hydrolyzes single-stranded DNA or mismatched double-stranded DNA and polynucleotides, releasing free uracil.. Excises uracil residues from the DNA which can arise as a result of misincorporation of dUMP residues by DNA polymerase or due to deamination of cytosine. The polypeptide is Uracil-DNA glycosylase (Brevibacillus brevis (strain 47 / JCM 6285 / NBRC 100599)).